The primary structure comprises 193 residues: AP-3 complex subunit sigma-1 (193 aa).

A Phosphoserine modification is found at S191.

The protein belongs to the adaptor complexes small subunit family. Adaptor protein complex 3 (AP-3) is a heterotetramer composed of two large adaptins (delta-type subunit AP3D1 and beta-type subunit AP3B1 or AP3B2), a medium adaptin (mu-type subunit AP3M1 or AP3M2) and a small adaptin (sigma-type subunit APS1 or AP3S2). Interacts with AGAP1. AP-3 associates with the BLOC-1 complex.

It localises to the golgi apparatus. Its subcellular location is the cytoplasmic vesicle membrane. Functionally, part of the AP-3 complex, an adaptor-related complex which is not clathrin-associated. The complex is associated with the Golgi region as well as more peripheral structures. It facilitates the budding of vesicles from the Golgi membrane and may be directly involved in trafficking to lysosomes. In concert with the BLOC-1 complex, AP-3 is required to target cargos into vesicles assembled at cell bodies for delivery into neurites and nerve terminals. The protein is AP-3 complex subunit sigma-1 (AP3S1) of Bos taurus (Bovine).